We begin with the raw amino-acid sequence, 285 residues long: tRNA pseudouridine synthase A (285 aa).

The Nucleophile role is filled by D69. Y127 contacts substrate.

Belongs to the tRNA pseudouridine synthase TruA family. In terms of assembly, homodimer.

The enzyme catalyses uridine(38/39/40) in tRNA = pseudouridine(38/39/40) in tRNA. Functionally, formation of pseudouridine at positions 38, 39 and 40 in the anticodon stem and loop of transfer RNAs. The protein is tRNA pseudouridine synthase A of Pseudomonas aeruginosa (strain ATCC 15692 / DSM 22644 / CIP 104116 / JCM 14847 / LMG 12228 / 1C / PRS 101 / PAO1).